The primary structure comprises 152 residues: Cell division protein SepF (152 aa).

The protein belongs to the SepF family. Homodimer. Interacts with FtsZ.

Its subcellular location is the cytoplasm. Functionally, cell division protein that is part of the divisome complex and is recruited early to the Z-ring. Probably stimulates Z-ring formation, perhaps through the cross-linking of FtsZ protofilaments. Its function overlaps with FtsA. This chain is Cell division protein SepF, found in Clostridioides difficile (strain 630) (Peptoclostridium difficile).